The sequence spans 114 residues: Hydrogenase maturation factor HypA (114 aa).

His2 is a Ni(2+) binding site. Zn(2+) contacts are provided by Cys73, Cys76, Cys89, and Cys92.

The protein belongs to the HypA/HybF family.

In terms of biological role, involved in the maturation of [NiFe] hydrogenases. Required for nickel insertion into the metal center of the hydrogenase. The sequence is that of Hydrogenase maturation factor HypA from Psychromonas ingrahamii (strain DSM 17664 / CCUG 51855 / 37).